We begin with the raw amino-acid sequence, 376 residues long: Deoxyguanosinetriphosphate triphosphohydrolase-like protein (376 aa).

A disordered region spans residues 1-32 (MEPSFAPYAAHSSQTRGRVHREAPAAPRSEFQ). An HD domain is found at 65–196 (RLTHSIEVAQ…ANLADEIAYN (132 aa)).

Belongs to the dGTPase family. Type 2 subfamily.

The sequence is that of Deoxyguanosinetriphosphate triphosphohydrolase-like protein from Thiobacillus denitrificans (strain ATCC 25259 / T1).